The sequence spans 426 residues: Enolase (426 aa).

Residue Q162 coordinates (2R)-2-phosphoglycerate. Residue E204 is the Proton donor of the active site. Residues D241, E288, and D315 each coordinate Mg(2+). (2R)-2-phosphoglycerate-binding residues include K340, R369, S370, and K391. The active-site Proton acceptor is K340.

This sequence belongs to the enolase family. Mg(2+) serves as cofactor.

The protein resides in the cytoplasm. Its subcellular location is the secreted. The protein localises to the cell surface. It catalyses the reaction (2R)-2-phosphoglycerate = phosphoenolpyruvate + H2O. Its pathway is carbohydrate degradation; glycolysis; pyruvate from D-glyceraldehyde 3-phosphate: step 4/5. Its function is as follows. Catalyzes the reversible conversion of 2-phosphoglycerate (2-PG) into phosphoenolpyruvate (PEP). It is essential for the degradation of carbohydrates via glycolysis. This Bacteroides thetaiotaomicron (strain ATCC 29148 / DSM 2079 / JCM 5827 / CCUG 10774 / NCTC 10582 / VPI-5482 / E50) protein is Enolase.